The primary structure comprises 208 residues: Large ribosomal subunit protein uL3 (208 aa).

Residues 116 to 148 (GFQGVIKRHGQSRGPMAHGSRYHRRPGSMGPVA) form a disordered region.

This sequence belongs to the universal ribosomal protein uL3 family. In terms of assembly, part of the 50S ribosomal subunit. Forms a cluster with proteins L14 and L19.

Its function is as follows. One of the primary rRNA binding proteins, it binds directly near the 3'-end of the 23S rRNA, where it nucleates assembly of the 50S subunit. The polypeptide is Large ribosomal subunit protein uL3 (Streptococcus agalactiae serotype Ia (strain ATCC 27591 / A909 / CDC SS700)).